A 423-amino-acid polypeptide reads, in one-letter code: Transcription factor AP-2-epsilon (423 aa).

A disordered region spans residues 1 to 108 (MLVHSYSSME…EDAGLLSQPH (108 aa)). Low complexity predominate over residues 14–27 (GLSSSSPGGRLSQL). Residues 50-55 (YFPPPY) carry the PPxY motif motif. Residues 57-70 (QSSLSYSQSQDGGY) are compositionally biased toward low complexity. Polar residues predominate over residues 79 to 93 (SLNSLHQHQQAAWHS). The H-S-H (helix-span-helix), dimerization stretch occupies residues 276 to 405 (RRKAANVTLL…YLLEALKLLD (130 aa)).

It belongs to the AP-2 family. Binds DNA as a dimer. Can form homodimers or heterodimers with other AP-2 family members.

It localises to the nucleus. Functionally, sequence-specific DNA-binding protein that interacts with inducible viral and cellular enhancer elements to regulate transcription of selected genes. AP-2 factors bind to the consensus sequence 5'-GCCNNNGGC-3' and activate genes involved in a large spectrum of important biological functions. The polypeptide is Transcription factor AP-2-epsilon (Danio rerio (Zebrafish)).